Consider the following 404-residue polypeptide: Demethylphylloquinone reductase NdbB (404 aa).

7 to 43 (RICILGGGFGGLYTALRLGQLSWEGHTPPEIVLVDQR) contributes to the FAD binding site. 159 to 195 (IRIAIVGGGYSGVELAAKLGDRLGERGRIRIIERGKE) is a binding site for NADP(+).

Belongs to the NADH dehydrogenase family. FAD is required as a cofactor.

It carries out the reaction demethylphylloquinone + NADPH + H(+) = demethylphylloquinol + NADP(+). Its pathway is cofactor biosynthesis; phylloquinone biosynthesis. Inhibited by dicumarol. In terms of biological role, bifunctional oxidoreductase probably ables to act both on prenyl naphthoquinones and on prenyl benzoquinones. Catalyzes the penultimate step in the biosynthesis of vitamin K1. The polypeptide is Demethylphylloquinone reductase NdbB (Synechocystis sp. (strain ATCC 27184 / PCC 6803 / Kazusa)).